Consider the following 158-residue polypeptide: UPF0758 protein YkfG (158 aa).

The region spanning 36-158 is the MPN domain; the sequence is AFTSTHAVRE…IYSFAEHGLL (123 aa). Zn(2+) contacts are provided by histidine 107, histidine 109, and aspartate 120. A JAMM motif motif is present at residues 107-120; the sequence is HNHPSGETTPSQAD.

It belongs to the UPF0758 family.

The sequence is that of UPF0758 protein YkfG (ykfG) from Escherichia coli (strain K12).